We begin with the raw amino-acid sequence, 83 residues long: Small ribosomal subunit protein eS21 (83 aa).

It belongs to the eukaryotic ribosomal protein eS21 family. In terms of assembly, component of the 40S small ribosomal subunit.

The protein resides in the cytoplasm. It is found in the cytosol. It localises to the rough endoplasmic reticulum. The polypeptide is Small ribosomal subunit protein eS21 (RpS21) (Spodoptera frugiperda (Fall armyworm)).